We begin with the raw amino-acid sequence, 1416 residues long: Telomere-associated protein RIF1 (1416 aa).

Disordered regions lie at residues 789–858 (PIRK…PVVQ), 886–984 (PEVA…HLTG), 1021–1054 (ARAQ…QAPP), and 1166–1186 (TART…APEE). The segment covering 928-945 (GSSGDPAASAGAVAAGEM) has biased composition (low complexity). Positions 1029–1050 (QVSTPTSELNELTGTDHTSTPI) are enriched in polar residues.

It belongs to the RIF1 family. Highly divergent. In terms of assembly, interacts with Pp1-87b. Interacts with SuUR (via SNF2-like region). Post-translationally, phosphorylated, probably by Cdk1; phosphorylation regulates dissociation from heterochromatin. In terms of tissue distribution, expressed in nurse cells and follicle cells in the adult female (at protein level). Detected in adult at extremely low levels.

The protein resides in the nucleus. Its subcellular location is the chromosome. It is found in the telomere. Regulates the timing of initiation of DNA replication. Functions in copy number control by promoting the underreplication of DNA, which is found in many late replicating euchromatic regions of salivary gland polytene chromosomes. Promotes underreplication by localizing to active DNA replication forks in a partially SuUR-dependent manner, and inhibiting replication fork progression. Might also work as an adapter to recruit Pp1-87B to multiple sites on the chromosome and may function with Pp1-87B to mediate underreplication. Plays an essential role in embryonic development, in the transition from larvae to pupae and, probably, in proliferating tissues later on. In embryos, during mid-blastula transition, binds to and selectively delays the replication of large blocks of repetitive DNA satellite sequences during S phase in response to the activity of Cdk1; maternal Rif1 is specifically required for the normal extension of S phase 14. Unlike mammalian orthologs, does not appear to play a role in DNA damage repair. The polypeptide is Telomere-associated protein RIF1 (Drosophila melanogaster (Fruit fly)).